We begin with the raw amino-acid sequence, 384 residues long: Odorant receptor 46a, isoform B (384 aa).

The Cytoplasmic segment spans residues 1–37 (MVTEDFYKYQVWYFQILGVWQLPTWAADHQRRFQSMR). A helical transmembrane segment spans residues 38–58 (FGFILVILFIMLLLFSFEMLN). The N-linked (GlcNAc...) asparagine glycan is linked to Asn-59. At 59–65 (NISQVRE) the chain is on the extracellular side. A helical membrane pass occupies residues 66-86 (ILKVFFMFATEISCMAKLLHL). Residues 87-130 (KLKSRKLAGLVDAMLSPEFGVKSEQEMQMLELDRVAVVRMRNSY) are Cytoplasmic-facing. Residues 131–151 (GIMSLGAASLILIVPCFDNFG) form a helical membrane-spanning segment. Residues 152 to 165 (ELPLAMLEVCSIEG) are Extracellular-facing. Residues 166-186 (WICYWSQYLFHSICLLPTCVL) traverse the membrane as a helical segment. The Cytoplasmic portion of the chain corresponds to 187–247 (NITYDSVAYS…YNRIVRFKDL (61 aa)). Residues 248–268 (VELFIKGPGSVQLMCSVLVLV) traverse the membrane as a helical segment. Residues 269–283 (SNLYDMSTMSIANGD) lie on the Extracellular side of the membrane. The chain crosses the membrane as a helical span at residues 284-304 (AIFMLKTCIYQLVMLWQIFII). Residues 305 to 348 (CYASNEVTVQSSRLCHSIYSSQWTGWNRANRRIVLLMMQRFNSP) lie on the Cytoplasmic side of the membrane. A helical membrane pass occupies residues 349 to 369 (MLLSTFNPTFAFSLEAFGSIV). Asn-370 carries N-linked (GlcNAc...) asparagine glycosylation. The Extracellular portion of the chain corresponds to 370–384 (NCSYSYFALLKRVNS).

The protein belongs to the insect chemoreceptor superfamily. Heteromeric odorant receptor channel (TC 1.A.69) family. Or2a subfamily. Interacts with Orco. Complexes exist early in the endomembrane system in olfactory sensory neurons (OSNs), coupling these complexes to the conserved ciliary trafficking pathway. Isoform B is expressed in the antenna.

The protein localises to the cell membrane. Odorant receptor which mediates acceptance or avoidance behavior, depending on its substrates. The odorant receptor repertoire encodes a large collection of odor stimuli that vary widely in identity, intensity, and duration. May form a complex with Orco to form odorant-sensing units, providing sensitive and prolonged odorant signaling and calcium permeability. The sequence is that of Odorant receptor 46a, isoform B (Or46a) from Drosophila melanogaster (Fruit fly).